A 261-amino-acid chain; its full sequence is Cytochrome c oxidase subunit 3 (261 aa).

The Mitochondrial matrix segment spans residues 1 to 15 (MAHQAHAYHMVDPSP). The helical transmembrane segment at 16–34 (WPLTGAIAALLMTSGLAIW) threads the bilayer. The Mitochondrial intermembrane portion of the chain corresponds to 35-40 (FHFHST). Residues 41–66 (TLMTLGLILLLLTMYQWWRDIIREGT) traverse the membrane as a helical segment. The Mitochondrial matrix portion of the chain corresponds to 67–72 (FQGHHT). A helical transmembrane segment spans residues 73 to 105 (PPVQKGLRYGMILFITSEVFFFLGFFWAFYHSS). At 106–128 (LAPTPELGGCWPPTGITPLDPFE) the chain is on the mitochondrial intermembrane side. The chain crosses the membrane as a helical span at residues 129 to 152 (VPLLNTAVLLASGVTVTWAHHSIM). Residues 153 to 155 (EGE) are Mitochondrial matrix-facing. Residues 156–183 (RKQAIQSLALTILLGLYFTALQAMEYYE) form a helical membrane-spanning segment. Topologically, residues 184 to 190 (APFTIAD) are mitochondrial intermembrane. Residues 191–223 (GVYGSTFFVATGFHGLHVIIGSTFLAVCLLRQI) form a helical membrane-spanning segment. Topologically, residues 224-232 (QYHFTSEHH) are mitochondrial matrix. The chain crosses the membrane as a helical span at residues 233–256 (FGFEAAAWYWHFVDVVWLFLYVSI). At 257–261 (YWWGS) the chain is on the mitochondrial intermembrane side.

It belongs to the cytochrome c oxidase subunit 3 family. Component of the cytochrome c oxidase (complex IV, CIV), a multisubunit enzyme composed of 14 subunits. The complex is composed of a catalytic core of 3 subunits MT-CO1, MT-CO2 and MT-CO3, encoded in the mitochondrial DNA, and 11 supernumerary subunits COX4I, COX5A, COX5B, COX6A, COX6B, COX6C, COX7A, COX7B, COX7C, COX8 and NDUFA4, which are encoded in the nuclear genome. The complex exists as a monomer or a dimer and forms supercomplexes (SCs) in the inner mitochondrial membrane with NADH-ubiquinone oxidoreductase (complex I, CI) and ubiquinol-cytochrome c oxidoreductase (cytochrome b-c1 complex, complex III, CIII), resulting in different assemblies (supercomplex SCI(1)III(2)IV(1) and megacomplex MCI(2)III(2)IV(2)).

Its subcellular location is the mitochondrion inner membrane. It catalyses the reaction 4 Fe(II)-[cytochrome c] + O2 + 8 H(+)(in) = 4 Fe(III)-[cytochrome c] + 2 H2O + 4 H(+)(out). In terms of biological role, component of the cytochrome c oxidase, the last enzyme in the mitochondrial electron transport chain which drives oxidative phosphorylation. The respiratory chain contains 3 multisubunit complexes succinate dehydrogenase (complex II, CII), ubiquinol-cytochrome c oxidoreductase (cytochrome b-c1 complex, complex III, CIII) and cytochrome c oxidase (complex IV, CIV), that cooperate to transfer electrons derived from NADH and succinate to molecular oxygen, creating an electrochemical gradient over the inner membrane that drives transmembrane transport and the ATP synthase. Cytochrome c oxidase is the component of the respiratory chain that catalyzes the reduction of oxygen to water. Electrons originating from reduced cytochrome c in the intermembrane space (IMS) are transferred via the dinuclear copper A center (CU(A)) of subunit 2 and heme A of subunit 1 to the active site in subunit 1, a binuclear center (BNC) formed by heme A3 and copper B (CU(B)). The BNC reduces molecular oxygen to 2 water molecules using 4 electrons from cytochrome c in the IMS and 4 protons from the mitochondrial matrix. The polypeptide is Cytochrome c oxidase subunit 3 (mt-co3) (Cyprinus carpio (Common carp)).